Consider the following 305-residue polypeptide: 4-diphosphocytidyl-2-C-methyl-D-erythritol kinase (305 aa).

Lysine 15 is a catalytic residue. 99-109 is a binding site for ATP; the sequence is PMGGGIGGGSS. Aspartate 141 is an active-site residue.

This sequence belongs to the GHMP kinase family. IspE subfamily.

The catalysed reaction is 4-CDP-2-C-methyl-D-erythritol + ATP = 4-CDP-2-C-methyl-D-erythritol 2-phosphate + ADP + H(+). It functions in the pathway isoprenoid biosynthesis; isopentenyl diphosphate biosynthesis via DXP pathway; isopentenyl diphosphate from 1-deoxy-D-xylulose 5-phosphate: step 3/6. In terms of biological role, catalyzes the phosphorylation of the position 2 hydroxy group of 4-diphosphocytidyl-2C-methyl-D-erythritol. The sequence is that of 4-diphosphocytidyl-2-C-methyl-D-erythritol kinase from Marinomonas sp. (strain MWYL1).